Reading from the N-terminus, the 143-residue chain is 3-dehydroquinate dehydratase (143 aa).

Catalysis depends on Y22, which acts as the Proton acceptor. Residues N73, H79, and D86 each coordinate substrate. The Proton donor role is filled by H99. Substrate is bound by residues I100 to S101 and R110.

The protein belongs to the type-II 3-dehydroquinase family. Homododecamer.

The enzyme catalyses 3-dehydroquinate = 3-dehydroshikimate + H2O. It participates in metabolic intermediate biosynthesis; chorismate biosynthesis; chorismate from D-erythrose 4-phosphate and phosphoenolpyruvate: step 3/7. Catalyzes a trans-dehydration via an enolate intermediate. This is 3-dehydroquinate dehydratase from Mycobacterium avium (strain 104).